A 640-amino-acid polypeptide reads, in one-letter code: Fructose-1,6-bisphosphatase class 3 (640 aa).

It belongs to the FBPase class 3 family. The cofactor is Mn(2+).

The catalysed reaction is beta-D-fructose 1,6-bisphosphate + H2O = beta-D-fructose 6-phosphate + phosphate. The protein operates within carbohydrate biosynthesis; gluconeogenesis. The chain is Fructose-1,6-bisphosphatase class 3 from Lactococcus lactis subsp. cremoris (strain MG1363).